A 628-amino-acid chain; its full sequence is Phosphomethylpyrimidine synthase (628 aa).

Residues Asn-228, Met-257, Tyr-286, His-322, 342-344 (SRG), 383-386 (DGLR), and Glu-422 each bind substrate. His-426 provides a ligand contact to Zn(2+). Tyr-449 is a binding site for substrate. His-490 contacts Zn(2+). Residues Cys-570, Cys-573, and Cys-578 each contribute to the [4Fe-4S] cluster site.

This sequence belongs to the ThiC family. In terms of assembly, homodimer. [4Fe-4S] cluster serves as cofactor.

The catalysed reaction is 5-amino-1-(5-phospho-beta-D-ribosyl)imidazole + S-adenosyl-L-methionine = 4-amino-2-methyl-5-(phosphooxymethyl)pyrimidine + CO + 5'-deoxyadenosine + formate + L-methionine + 3 H(+). It participates in cofactor biosynthesis; thiamine diphosphate biosynthesis. In terms of biological role, catalyzes the synthesis of the hydroxymethylpyrimidine phosphate (HMP-P) moiety of thiamine from aminoimidazole ribotide (AIR) in a radical S-adenosyl-L-methionine (SAM)-dependent reaction. The chain is Phosphomethylpyrimidine synthase from Methylibium petroleiphilum (strain ATCC BAA-1232 / LMG 22953 / PM1).